Here is a 271-residue protein sequence, read N- to C-terminus: Glutamate racemase (271 aa).

Substrate-binding positions include 10 to 11 (DS) and 42 to 43 (YG). Catalysis depends on cysteine 73, which acts as the Proton donor/acceptor. 74–75 (NT) is a substrate binding site. Residue cysteine 183 is the Proton donor/acceptor of the active site. 184 to 185 (TH) provides a ligand contact to substrate.

The protein belongs to the aspartate/glutamate racemases family.

It carries out the reaction L-glutamate = D-glutamate. It functions in the pathway cell wall biogenesis; peptidoglycan biosynthesis. In terms of biological role, provides the (R)-glutamate required for cell wall biosynthesis. This Streptococcus thermophilus (strain CNRZ 1066) protein is Glutamate racemase.